Reading from the N-terminus, the 73-residue chain is UPF0057 membrane protein At4g30650 (73 aa).

The next 2 membrane-spanning stretches (helical) occupy residues 4–24 (NMEV…GVCL) and 37–57 (LVLT…VIVF).

Belongs to the UPF0057 (PMP3) family.

Its subcellular location is the membrane. This Arabidopsis thaliana (Mouse-ear cress) protein is UPF0057 membrane protein At4g30650.